A 307-amino-acid polypeptide reads, in one-letter code: Membrane protein insertase YidC 2 (307 aa).

An N-terminal signal peptide occupies residues 1-23 (MKLTLNRILFSGLALSILFTLTG). The N-palmitoyl cysteine moiety is linked to residue C24. Residue C24 is the site of S-diacylglycerol cysteine attachment. Transmembrane regions (helical) follow at residues 58–78 (LGYG…ILPL), 135–155 (LGGI…AMYF), 179–199 (VLTA…MMAV), 209–225 (TMMY…SFSL), and 231–251 (LYWL…TYLL). The disordered stretch occupies residues 263–307 (YAKNPPKAYQSTSSRKDVTPSQNMEQANLPKKIKSNRNAGKQRKR). Positions 271 to 288 (YQSTSSRKDVTPSQNMEQ) are enriched in polar residues. Residues 293-307 (KKIKSNRNAGKQRKR) show a composition bias toward basic residues.

Belongs to the OXA1/ALB3/YidC family. Type 2 subfamily.

The protein resides in the cell membrane. Required for the insertion and/or proper folding and/or complex formation of integral membrane proteins into the membrane. Involved in integration of membrane proteins that insert both dependently and independently of the Sec translocase complex, as well as at least some lipoproteins. The polypeptide is Membrane protein insertase YidC 2 (Streptococcus pyogenes serotype M3 (strain ATCC BAA-595 / MGAS315)).